We begin with the raw amino-acid sequence, 157 residues long: Protein Smg homolog (157 aa).

This sequence belongs to the Smg family.

The chain is Protein Smg homolog from Stenotrophomonas maltophilia (strain R551-3).